A 479-amino-acid polypeptide reads, in one-letter code: Glycerol-3-phosphate acyltransferase RAM2 (479 aa).

The next 4 helical transmembrane spans lie at 14–34, 37–57, 215–235, and 237–257; these read YFAL…LVLA, LAGL…LIFA, SPLM…LACL, and IAAG…ALGV. The HXXXXD motif motif lies at 284 to 289; the sequence is HRTLLD. Asparagine 448 is a glycosylation site (N-linked (GlcNAc...) asparagine).

It belongs to the GPAT/DAPAT family.

Its subcellular location is the membrane. It carries out the reaction sn-glycerol 3-phosphate + an acyl-CoA = a 1-acyl-sn-glycero-3-phosphate + CoA. It participates in lipid metabolism; glycerolipid metabolism. In terms of biological role, involved in the production of cutin monomers. Esterifies acyl-group from acyl-ACP to the sn-2 position of glycerol-3-phosphate, a step in cutin biosynthesis. Required for colonization of the root by mycorrhizal fungi, and appropriate hyphopodia and arbuscule formation. Cutin monomers act as plant signals that promote colonization by arbuscular mycorrhizal fungi. This signaling function has been recruited by pathogenic oomycetes to facilitate appressoria formation and their own invasion. This chain is Glycerol-3-phosphate acyltransferase RAM2, found in Petunia hybrida (Petunia).